Here is a 669-residue protein sequence, read N- to C-terminus: DNA ligase (669 aa).

NAD(+)-binding positions include 31–35, 80–81, and glutamate 112; these read DSVYD and SL. Lysine 114 acts as the N6-AMP-lysine intermediate in catalysis. NAD(+) is bound by residues arginine 135, glutamate 172, lysine 289, and lysine 313. Zn(2+)-binding residues include cysteine 407, cysteine 410, cysteine 425, and cysteine 430. Residues 591 to 669 enclose the BRCT domain; it reads TDSGKLKGKT…EAEFLQLLEP (79 aa).

This sequence belongs to the NAD-dependent DNA ligase family. LigA subfamily. Requires Mg(2+) as cofactor. Mn(2+) serves as cofactor.

It carries out the reaction NAD(+) + (deoxyribonucleotide)n-3'-hydroxyl + 5'-phospho-(deoxyribonucleotide)m = (deoxyribonucleotide)n+m + AMP + beta-nicotinamide D-nucleotide.. DNA ligase that catalyzes the formation of phosphodiester linkages between 5'-phosphoryl and 3'-hydroxyl groups in double-stranded DNA using NAD as a coenzyme and as the energy source for the reaction. It is essential for DNA replication and repair of damaged DNA. The protein is DNA ligase of Synechocystis sp. (strain ATCC 27184 / PCC 6803 / Kazusa).